Reading from the N-terminus, the 182-residue chain is ADP-ribosylation factor 1 (182 aa).

Gly2 carries the N-myristoyl glycine lipid modification. GTP contacts are provided by residues 24-31, 67-71, and 126-129; these read GLDAAGKT, DVGGQ, and NKQD.

This sequence belongs to the small GTPase superfamily. Arf family.

The protein resides in the golgi apparatus. It catalyses the reaction GTP + H2O = GDP + phosphate + H(+). Its function is as follows. GTP-binding protein involved in protein trafficking; may modulate vesicle budding and uncoating within the Golgi apparatus. In Dictyostelium discoideum (Social amoeba), this protein is ADP-ribosylation factor 1 (arfA).